The sequence spans 865 residues: Protein translocase subunit SecA (865 aa).

ATP contacts are provided by residues Gln-93, 111-115 (GEGKT), and Asp-501. Zn(2+) contacts are provided by Cys-841, Cys-843, Cys-852, and Cys-853.

This sequence belongs to the SecA family. In terms of assembly, monomer and homodimer. Part of the essential Sec protein translocation apparatus which comprises SecA, SecYEG and auxiliary proteins SecDF-YajC and YidC. Zn(2+) serves as cofactor.

It is found in the cell inner membrane. The protein localises to the cytoplasm. It catalyses the reaction ATP + H2O + cellular proteinSide 1 = ADP + phosphate + cellular proteinSide 2.. Part of the Sec protein translocase complex. Interacts with the SecYEG preprotein conducting channel. Has a central role in coupling the hydrolysis of ATP to the transfer of proteins into and across the cell membrane, serving as an ATP-driven molecular motor driving the stepwise translocation of polypeptide chains across the membrane. The sequence is that of Protein translocase subunit SecA from Helicobacter pylori (strain Shi470).